The chain runs to 493 residues: Proline--tRNA ligase (493 aa).

The protein belongs to the class-II aminoacyl-tRNA synthetase family. ProS type 3 subfamily. Homodimer.

The protein localises to the cytoplasm. It catalyses the reaction tRNA(Pro) + L-proline + ATP = L-prolyl-tRNA(Pro) + AMP + diphosphate. Catalyzes the attachment of proline to tRNA(Pro) in a two-step reaction: proline is first activated by ATP to form Pro-AMP and then transferred to the acceptor end of tRNA(Pro). The chain is Proline--tRNA ligase from Azobacteroides pseudotrichonymphae genomovar. CFP2.